Reading from the N-terminus, the 44-residue chain is Defensin-like peptide (44 aa).

3 cysteine pairs are disulfide-bonded: Cys-7–Cys-32, Cys-18–Cys-40, and Cys-22–Cys-42.

Hemolymph.

Its subcellular location is the secreted. Functionally, has antibacterial activity against the Gram-positive bacterium S.lutea (MIC=1.9 uM). Lacks antibacterial activity against the Gram-positive bacteria L.monocytogenes and M.luteus, and the Gram-negative bacteria E.coli D31, E.coli ATCC 25922, and S.typhimurium. Has antifungal activity against A.niger (MIC=2.9 uM), C.albicans (MIC=2.9 uM), C.fructus (MIC=2.9 uM), C.wickerhamii (MIC=2.9 uM), P.pastoris (MIC=2.9 uM), P.stiptis (MIC=2.9 uM), P.tannophilus (MIC=2.9 uM), T.harzianum (MIC=2.9 uM), and Z.marxianus (MIC=2.9 uM), but lacks antifungal activity against C.albidus, F.oxysporum, and S.cerevisiae. This Galleria mellonella (Greater wax moth) protein is Defensin-like peptide.